The following is a 666-amino-acid chain: tRNA 5-methylaminomethyl-2-thiouridine biosynthesis bifunctional protein MnmC (666 aa).

The interval 1 to 245 is tRNA (mnm(5)s(2)U34)-methyltransferase; the sequence is MKQYAIQPAT…KREMLCGVME (245 aa). The tract at residues 270–666 is FAD-dependent cmnm(5)s(2)U34 oxidoreductase; it reads IGGGIASALL…RKLLKGKAVK (397 aa).

It in the N-terminal section; belongs to the methyltransferase superfamily. tRNA (mnm(5)s(2)U34)-methyltransferase family. The protein in the C-terminal section; belongs to the DAO family. FAD serves as cofactor.

The protein localises to the cytoplasm. It catalyses the reaction 5-aminomethyl-2-thiouridine(34) in tRNA + S-adenosyl-L-methionine = 5-methylaminomethyl-2-thiouridine(34) in tRNA + S-adenosyl-L-homocysteine + H(+). Catalyzes the last two steps in the biosynthesis of 5-methylaminomethyl-2-thiouridine (mnm(5)s(2)U) at the wobble position (U34) in tRNA. Catalyzes the FAD-dependent demodification of cmnm(5)s(2)U34 to nm(5)s(2)U34, followed by the transfer of a methyl group from S-adenosyl-L-methionine to nm(5)s(2)U34, to form mnm(5)s(2)U34. The protein is tRNA 5-methylaminomethyl-2-thiouridine biosynthesis bifunctional protein MnmC of Salmonella choleraesuis (strain SC-B67).